A 557-amino-acid chain; its full sequence is Acid-sensing ion channel 1B (557 aa).

The Cytoplasmic segment spans residues 1–98 (MVRITCTISF…SIRQGLWALV (98 aa)). The span at 36 to 45 (KDGEQGKYQE) shows a compositional bias: basic and acidic residues. The interval 36-57 (KDGEQGKYQEEGDDPDAYDGPE) is disordered. The segment covering 46 to 57 (EGDDPDAYDGPE) has biased composition (acidic residues). A helical transmembrane segment spans residues 99–115 (FLLAISMFLLQVVDRVI). At 116–460 (YYLQYDYVTL…ETIEQKKAYE (345 aa)) the chain is on the extracellular side. 2 N-linked (GlcNAc...) asparagine glycosylation sites follow: Asn133 and Asn194. 7 cysteine pairs are disulfide-bonded: Cys142/Cys229, Cys207/Cys214, Cys325/Cys400, Cys343/Cys396, Cys347/Cys394, Cys356/Cys378, and Cys358/Cys370. N-linked (GlcNAc...) asparagine glycans are attached at residues Asn401 and Asn428. Residues 461 to 491 (LAGLLGDIGGQMGLFIGASILTILELFDYLY) form a discontinuously helical membrane-spanning segment. The short motif at 477-479 (GAS) is the GAS motif; ion selectivity filter element. The Cytoplasmic portion of the chain corresponds to 492–557 (EVIKFKLCRC…GQGNFEDFTC (66 aa)).

Belongs to the amiloride-sensitive sodium channel (TC 1.A.6) family. ASIC1 subfamily. In terms of assembly, homotrimer. Heterotrimer; with other ASIC proteins producing channel with different properties. As to expression, expressed in central nervous system.

It localises to the cell membrane. It is found in the postsynaptic cell membrane. Its subcellular location is the cell projection. The protein resides in the dendrite. The enzyme catalyses Na(+)(in) = Na(+)(out). The catalysed reaction is K(+)(in) = K(+)(out). It carries out the reaction Li(+)(in) = Li(+)(out). It catalyses the reaction Ca(2+)(in) = Ca(2+)(out). Inhibited by the diuretic drug amiloride. Its function is as follows. Forms voltage-independent, pH-gated trimeric sodium channels that act as postsynaptic excitatory receptors in the nervous system, playing a crucial role in regulating synaptic plasticity, learning, and memory. Upon extracellular pH drop this channel elicits transient, fast activating, and completely desensitizing inward currents. Displays high selectivity for sodium ions but can also permit the permeation of other cations. In Danio rerio (Zebrafish), this protein is Acid-sensing ion channel 1B (asic1b).